Consider the following 527-residue polypeptide: Catalase (527 aa).

Residues methionine 1 to glutamine 22 are compositionally biased toward basic and acidic residues. Residues methionine 1 to proline 34 form a disordered region. Alanine 2 carries the N-acetylalanine modification. Serine 9 bears the Phosphoserine mark. Lysine 13 carries the post-translational modification N6-succinyllysine. Residues histidine 75 and asparagine 148 contribute to the active site. Residues histidine 194, serine 201, arginine 203, and asparagine 213 each coordinate NADP(+). Position 221 is an N6-succinyllysine (lysine 221). Lysine 233 is modified (N6-acetyllysine). NADP(+)-binding residues include lysine 237, tryptophan 303, histidine 305, and lysine 306. An N6-acetyllysine; alternate modification is found at lysine 306. N6-succinyllysine; alternate is present on lysine 306. Residue tyrosine 358 participates in heme binding. Phosphoserine is present on residues serine 417 and serine 434. N6-acetyllysine; alternate is present on residues lysine 449 and lysine 480. Lysine 449 and lysine 480 each carry N6-succinyllysine; alternate. At threonine 511 the chain carries Phosphothreonine. Serine 517 is subject to Phosphoserine. Residue lysine 522 is modified to N6-succinyllysine. A Microbody targeting signal; atypical motif is present at residues lysine 524–leucine 527.

It belongs to the catalase family. Homotetramer. Interacts (via microbody targeting signal) with PEX5, monomeric form interacts with PEX5, leading to its translocation into peroxisomes. Heme serves as cofactor. The cofactor is NADP(+). As to expression, expressed in renal proximal tubules (at protein level).

Its subcellular location is the peroxisome matrix. The enzyme catalyses 2 H2O2 = O2 + 2 H2O. Catalyzes the degradation of hydrogen peroxide (H(2)O(2)) generated by peroxisomal oxidases to water and oxygen, thereby protecting cells from the toxic effects of hydrogen peroxide. Promotes growth of cells including T-cells, B-cells, myeloid leukemia cells, melanoma cells, mastocytoma cells and normal and transformed fibroblast cells. This Rattus norvegicus (Rat) protein is Catalase (Cat).